The sequence spans 179 residues: ATP-dependent protease subunit HslV (179 aa).

T6 is a catalytic residue. Positions 164, 167, and 170 each coordinate Na(+).

This sequence belongs to the peptidase T1B family. HslV subfamily. In terms of assembly, a double ring-shaped homohexamer of HslV is capped on each side by a ring-shaped HslU homohexamer. The assembly of the HslU/HslV complex is dependent on binding of ATP.

It is found in the cytoplasm. It catalyses the reaction ATP-dependent cleavage of peptide bonds with broad specificity.. Its activity is regulated as follows. Allosterically activated by HslU binding. Functionally, protease subunit of a proteasome-like degradation complex believed to be a general protein degrading machinery. This Listeria monocytogenes serotype 4b (strain CLIP80459) protein is ATP-dependent protease subunit HslV.